The primary structure comprises 80 residues: Trefoil factor 3 (80 aa).

The signal sequence occupies residues 1-21 (MEARMFWLLVVLLALASSSSA). One can recognise a P-type domain in the interval 30-73 (NQCAVPAKDRVDCGYPQVTPEQCNNRGCCFDSSIXGVPWCFKPL). Cystine bridges form between C32–C58, C42–C57, and C52–C69.

In terms of assembly, monomer. Homodimer; disulfide-linked.

Its subcellular location is the secreted. The protein localises to the extracellular space. It localises to the extracellular matrix. The protein resides in the cytoplasm. Involved in the maintenance and repair of the intestinal mucosa. Promotes the mobility of epithelial cells in healing processes (motogen). The protein is Trefoil factor 3 (TFF3) of Sus scrofa (Pig).